Consider the following 223-residue polypeptide: uncharacterized protein (223 aa).

Residues 11–71 form the HTH tetR-type domain; sequence EATFESFIDA…YLLEKRQMKK (61 aa). The segment at residues 34–53 is a DNA-binding region (H-T-H motif); it reads SVEDISRAAGYSKGAFYVHF.

This is an uncharacterized protein from Bacillus subtilis (strain 168).